The chain runs to 461 residues: Glycine--tRNA ligase (461 aa).

Substrate-binding residues include arginine 100 and glutamate 163. ATP is bound by residues 195-197 (RNE), 205-210 (FRTREF), 282-283 (EL), and 326-329 (GLGR). 210 to 214 (FEQME) serves as a coordination point for substrate. 322 to 326 (EPAAG) lines the substrate pocket.

Belongs to the class-II aminoacyl-tRNA synthetase family. In terms of assembly, homodimer.

It localises to the cytoplasm. The catalysed reaction is tRNA(Gly) + glycine + ATP = glycyl-tRNA(Gly) + AMP + diphosphate. Functionally, catalyzes the attachment of glycine to tRNA(Gly). This Corynebacterium efficiens (strain DSM 44549 / YS-314 / AJ 12310 / JCM 11189 / NBRC 100395) protein is Glycine--tRNA ligase.